The chain runs to 547 residues: CTP synthase (547 aa).

The segment at 1 to 269 (MKTKFIFVTG…DQKVAIMLRL (269 aa)) is amidoligase domain. Residue Ser14 coordinates CTP. Ser14 lines the UTP pocket. ATP is bound by residues 15–20 (SLGKGL) and Asp72. Residues Asp72 and Glu143 each contribute to the Mg(2+) site. CTP-binding positions include 150 to 152 (DIE), 190 to 195 (KTKPTQ), and Lys226. Residues 190–195 (KTKPTQ) and Lys226 each bind UTP. The Glutamine amidotransferase type-1 domain maps to 294–547 (TVAIVGKYVD…IGAAKKHAKV (254 aa)). An L-glutamine-binding site is contributed by Gly356. Cys383 functions as the Nucleophile; for glutamine hydrolysis in the catalytic mechanism. L-glutamine is bound by residues 384 to 387 (LGMQ), Glu407, and Arg475. Catalysis depends on residues His520 and Glu522.

Belongs to the CTP synthase family. As to quaternary structure, homotetramer.

The enzyme catalyses UTP + L-glutamine + ATP + H2O = CTP + L-glutamate + ADP + phosphate + 2 H(+). It carries out the reaction L-glutamine + H2O = L-glutamate + NH4(+). The catalysed reaction is UTP + NH4(+) + ATP = CTP + ADP + phosphate + 2 H(+). It participates in pyrimidine metabolism; CTP biosynthesis via de novo pathway; CTP from UDP: step 2/2. Allosterically activated by GTP, when glutamine is the substrate; GTP has no effect on the reaction when ammonia is the substrate. The allosteric effector GTP functions by stabilizing the protein conformation that binds the tetrahedral intermediate(s) formed during glutamine hydrolysis. Inhibited by the product CTP, via allosteric rather than competitive inhibition. In terms of biological role, catalyzes the ATP-dependent amination of UTP to CTP with either L-glutamine or ammonia as the source of nitrogen. Regulates intracellular CTP levels through interactions with the four ribonucleotide triphosphates. The polypeptide is CTP synthase (Desulfovibrio desulfuricans (strain ATCC 27774 / DSM 6949 / MB)).